We begin with the raw amino-acid sequence, 189 residues long: Transcription factor E (189 aa).

Residues 9–101 form the HTH TFE/IIEalpha-type domain; it reads AVKSLEIYVR…FWRIDSDTIN (93 aa).

It belongs to the TFE family. In terms of assembly, monomer. Interaction with RNA polymerase subunits RpoF and RpoE is necessary for Tfe stimulatory transcription activity. Able to interact with Tbp and RNA polymerase in the absence of DNA promoter. Interacts both with the preinitiation and elongation complexes.

Transcription factor that plays a role in the activation of archaeal genes transcribed by RNA polymerase. Facilitates transcription initiation by enhancing TATA-box recognition by TATA-box-binding protein (Tbp), and transcription factor B (Tfb) and RNA polymerase recruitment. Not absolutely required for transcription in vitro, but particularly important in cases where Tbp or Tfb function is not optimal. It dynamically alters the nucleic acid-binding properties of RNA polymerases by stabilizing the initiation complex and destabilizing elongation complexes. Seems to translocate with the RNA polymerase following initiation and acts by binding to the non template strand of the transcription bubble in elongation complexes. This is Transcription factor E from Aeropyrum pernix (strain ATCC 700893 / DSM 11879 / JCM 9820 / NBRC 100138 / K1).